A 54-amino-acid chain; its full sequence is Ovomucoid (54 aa).

The Kazal-like domain maps to Val4–Cys54. 3 cysteine pairs are disulfide-bonded: Cys6/Cys36, Cys14/Cys33, and Cys22/Cys54. A glycan (N-linked (GlcNAc...) asparagine) is linked at Asn43.

It is found in the secreted. The protein is Ovomucoid of Pavo muticus (Green peafowl).